The primary structure comprises 103 residues: Thioredoxin (103 aa).

A Thioredoxin domain is found at 1-103 (MVKEITDATF…ELDEVINKYV (103 aa)). A disulfide bond links cysteine 28 and cysteine 31.

It belongs to the thioredoxin family.

Its function is as follows. Component of the thioredoxin-thioredoxin reductase system. Participates in various redox reactions through the reversible oxidation of its active center dithiol to a disulfide and catalyzes dithiol-disulfide exchange reactions. The sequence is that of Thioredoxin (trxA) from Listeria innocua serovar 6a (strain ATCC BAA-680 / CLIP 11262).